The following is a 238-amino-acid chain: MTTYATDSQGKFIPATQRPDGTWRKPRRVRDGYVPQEEVPLYESKGKLFAQKPSLPPGLPPEMAQKAREKREKEQRKAAARPAQNPVPGLLILHEDNKANQRQAKPANAKPKKKAVELPDVLLEQKQKEEQKAASRQQAQDQRNSKQQQSQNQSKPLDDVTKAVQDLQLGTASGADGHSDLSKKLRKLRKKIREIEVIEERLRASDGPRPDKDQIEKAKRKAEILKEIEELERGGGHK.

The interval 1–183 (MTTYATDSQG…GADGHSDLSK (183 aa)) is disordered. 2 stretches are compositionally biased toward basic and acidic residues: residues 65 to 77 (QKAREKREKEQRK) and 123 to 133 (LEQKQKEEQKA). Residues 136–155 (RQQAQDQRNSKQQQSQNQSK) are compositionally biased toward low complexity. Positions 176-233 (DGHSDLSKKLRKLRKKIREIEVIEERLRASDGPRPDKDQIEKAKRKAEILKEIEELER) form a coiled coil.

This sequence belongs to the pym family. Interacts (via N-terminus) with mago and tsu/Y14; the interaction is direct.

The protein localises to the cytoplasm. It localises to the nucleus. Its function is as follows. Regulator of the exon junction complex (EJC), a multiprotein complex that associates immediately upstream of the exon-exon junction on mRNAs and serves as a positional landmarks for the intron exon structure of genes and directs post-transcriptional processes in the cytoplasm such as mRNA export, nonsense-mediated mRNA decay (NMD) or translation. The sequence is that of Partner of Y14 and mago from Culex quinquefasciatus (Southern house mosquito).